The following is a 255-amino-acid chain: Cytochrome c oxidase subunit 2 (255 aa).

Topologically, residues 1–42 are mitochondrial intermembrane; sequence MKFFFFSFINYKVLNDAARPWQIGFQDPATPIMEGIVNLHHD. Residues 43–63 traverse the membrane as a helical segment; it reads IIFFLIIIIIFVSWILFRTLF. Residues 64 to 83 are Mitochondrial matrix-facing; that stretch reads LFNSKTNPVAYNFSHGTFIE. The chain crosses the membrane as a helical span at residues 84–104; the sequence is LLWTLTPSLVLIGIAVPSFAL. The Mitochondrial intermembrane segment spans residues 105–255; that stretch reads LYSIDEIIDP…IRWVQNKILD (151 aa). Residues histidine 187, cysteine 222, glutamate 224, cysteine 226, histidine 230, and methionine 233 each coordinate Cu cation. Glutamate 224 lines the Mg(2+) pocket.

It belongs to the cytochrome c oxidase subunit 2 family. Component of the cytochrome c oxidase (complex IV, CIV), a multisubunit enzyme composed of a catalytic core of 3 subunits and several supernumerary subunits. The complex exists as a monomer or a dimer and forms supercomplexes (SCs) in the inner mitochondrial membrane with ubiquinol-cytochrome c oxidoreductase (cytochrome b-c1 complex, complex III, CIII). Cu cation is required as a cofactor.

Its subcellular location is the mitochondrion inner membrane. The enzyme catalyses 4 Fe(II)-[cytochrome c] + O2 + 8 H(+)(in) = 4 Fe(III)-[cytochrome c] + 2 H2O + 4 H(+)(out). In terms of biological role, component of the cytochrome c oxidase, the last enzyme in the mitochondrial electron transport chain which drives oxidative phosphorylation. The respiratory chain contains 3 multisubunit complexes succinate dehydrogenase (complex II, CII), ubiquinol-cytochrome c oxidoreductase (cytochrome b-c1 complex, complex III, CIII) and cytochrome c oxidase (complex IV, CIV), that cooperate to transfer electrons derived from NADH and succinate to molecular oxygen, creating an electrochemical gradient over the inner membrane that drives transmembrane transport and the ATP synthase. Cytochrome c oxidase is the component of the respiratory chain that catalyzes the reduction of oxygen to water. Electrons originating from reduced cytochrome c in the intermembrane space (IMS) are transferred via the dinuclear copper A center (CU(A)) of subunit 2 and heme A of subunit 1 to the active site in subunit 1, a binuclear center (BNC) formed by heme A3 and copper B (CU(B)). The BNC reduces molecular oxygen to 2 water molecules using 4 electrons from cytochrome c in the IMS and 4 protons from the mitochondrial matrix. The sequence is that of Cytochrome c oxidase subunit 2 (COX2) from Cyanidium caldarium (Red alga).